Consider the following 156-residue polypeptide: 6,7-dimethyl-8-ribityllumazine synthase (156 aa).

5-amino-6-(D-ribitylamino)uracil contacts are provided by residues Phe-22, 56 to 58 (AFE), and 80 to 82 (VVI). 85–86 (ST) contributes to the (2S)-2-hydroxy-3-oxobutyl phosphate binding site. The active-site Proton donor is His-88. Phe-113 is a binding site for 5-amino-6-(D-ribitylamino)uracil. Arg-127 provides a ligand contact to (2S)-2-hydroxy-3-oxobutyl phosphate.

The protein belongs to the DMRL synthase family.

The catalysed reaction is (2S)-2-hydroxy-3-oxobutyl phosphate + 5-amino-6-(D-ribitylamino)uracil = 6,7-dimethyl-8-(1-D-ribityl)lumazine + phosphate + 2 H2O + H(+). It functions in the pathway cofactor biosynthesis; riboflavin biosynthesis; riboflavin from 2-hydroxy-3-oxobutyl phosphate and 5-amino-6-(D-ribitylamino)uracil: step 1/2. Its function is as follows. Catalyzes the formation of 6,7-dimethyl-8-ribityllumazine by condensation of 5-amino-6-(D-ribitylamino)uracil with 3,4-dihydroxy-2-butanone 4-phosphate. This is the penultimate step in the biosynthesis of riboflavin. The sequence is that of 6,7-dimethyl-8-ribityllumazine synthase from Streptococcus agalactiae serotype Ia (strain ATCC 27591 / A909 / CDC SS700).